Reading from the N-terminus, the 712-residue chain is 1,4-alpha-glucan branching enzyme GlgB (712 aa).

Asp-397 serves as the catalytic Nucleophile. Residue Glu-450 is the Proton donor of the active site.

It belongs to the glycosyl hydrolase 13 family. GlgB subfamily. Monomer.

It catalyses the reaction Transfers a segment of a (1-&gt;4)-alpha-D-glucan chain to a primary hydroxy group in a similar glucan chain.. The protein operates within glycan biosynthesis; glycogen biosynthesis. Its function is as follows. Catalyzes the formation of the alpha-1,6-glucosidic linkages in glycogen by scission of a 1,4-alpha-linked oligosaccharide from growing alpha-1,4-glucan chains and the subsequent attachment of the oligosaccharide to the alpha-1,6 position. The sequence is that of 1,4-alpha-glucan branching enzyme GlgB from Bradyrhizobium sp. (strain BTAi1 / ATCC BAA-1182).